A 167-amino-acid chain; its full sequence is Osteocalcin 2a (167 aa).

An N-terminal signal peptide occupies residues Met1–Ser18. A propeptide spanning residues Met19–Arg118 is cleaved from the precursor. The disordered stretch occupies residues Leu28–Glu99. The segment covering Pro38–Ala87 has biased composition (low complexity). The region spanning Gln131–Gly163 is the Gla domain. Ca(2+)-binding residues include Glu133, Glu137, and Glu140. 4-carboxyglutamate occurs at positions 133, 137, and 140. An intrachain disulfide couples Cys139 to Cys145.

The protein belongs to the osteocalcin/matrix Gla protein family. Post-translationally, gamma-carboxyglutamate residues are formed by vitamin K dependent carboxylation. These residues are essential for the binding of calcium.

The protein resides in the secreted. Its function is as follows. Binds strongly to apatite and calcium. This is Osteocalcin 2a from Oncorhynchus mykiss (Rainbow trout).